Reading from the N-terminus, the 349-residue chain is Hydroxymethylglutaryl-CoA synthase (349 aa).

Residues Asp-29 and Ala-30 each contribute to the (3S)-3-hydroxy-3-methylglutaryl-CoA site. Glu-81 (proton donor/acceptor) is an active-site residue. 4 residues coordinate (3S)-3-hydroxy-3-methylglutaryl-CoA: Cys-113, Thr-154, Thr-202, and His-235. Cys-113 serves as the catalytic Acyl-thioester intermediate. His-235 (proton donor/acceptor) is an active-site residue. Arg-240 serves as a coordination point for CoA. (3S)-3-hydroxy-3-methylglutaryl-CoA-binding residues include Arg-244, Asn-267, and Ser-297.

Belongs to the thiolase-like superfamily. Archaeal HMG-CoA synthase family. Interacts with acetoacetyl-CoA thiolase that catalyzes the precedent step in the pathway and with a DUF35 protein. The acetoacetyl-CoA thiolase/HMG-CoA synthase complex channels the intermediate via a fused CoA-binding site, which allows for efficient coupling of the endergonic thiolase reaction with the exergonic HMGCS reaction.

The catalysed reaction is acetoacetyl-CoA + acetyl-CoA + H2O = (3S)-3-hydroxy-3-methylglutaryl-CoA + CoA + H(+). Its pathway is metabolic intermediate biosynthesis; (R)-mevalonate biosynthesis; (R)-mevalonate from acetyl-CoA: step 2/3. In terms of biological role, catalyzes the condensation of acetyl-CoA with acetoacetyl-CoA to form 3-hydroxy-3-methylglutaryl-CoA (HMG-CoA). Functions in the mevalonate (MVA) pathway leading to isopentenyl diphosphate (IPP), a key precursor for the biosynthesis of isoprenoid compounds that are building blocks of archaeal membrane lipids. The sequence is that of Hydroxymethylglutaryl-CoA synthase from Caldivirga maquilingensis (strain ATCC 700844 / DSM 13496 / JCM 10307 / IC-167).